The following is a 640-amino-acid chain: Autophagy-related protein 20 (640 aa).

Polar residues-rich tracts occupy residues 1–18 (MSDLNDVQENAKLNSETR) and 126–153 (AETCRTSLSGSINSMNGETSASEEPSVS). Disordered regions lie at residues 1-63 (MSDL…NNKV) and 126-156 (AETCRTSLSGSINSMNGETSASEEPSVSNRK). N-acetylserine is present on S2. Positions 140–301 (MNGETSASEE…DFLDPNNHNW (162 aa)) constitute a PX domain. R192, S194, K218, and R267 together coordinate a 1,2-diacyl-sn-glycero-3-phospho-(1D-myo-inositol-3-phosphate). 2 positions are modified to phosphoserine: S361 and S363. Coiled-coil stretches lie at residues 475 to 512 (LQNEMIKKSLNSKRAQLEKLEAQNNEYKDVDKIIDNEM) and 562 to 593 (TASINLKKEIEQLSESLEVTENDLEVISKVIK).

This sequence belongs to the sorting nexin family. Forms a complex with SNX4 and ATG17.

The protein localises to the endosome membrane. Its subcellular location is the preautophagosomal structure membrane. Functionally, required for cytoplasm to vacuole transport (Cvt), pexophagy and mitophagy. Also involved in endoplasmic reticulum-specific autophagic process and is essential for the survival of cells subjected to severe ER stress. Functions in protein retrieval from the endocytic pathway. Required for proper sorting of the v-SNARE protein SNC1. The chain is Autophagy-related protein 20 (ATG20) from Saccharomyces cerevisiae (strain ATCC 204508 / S288c) (Baker's yeast).